The primary structure comprises 141 residues: Galactose-6-phosphate isomerase subunit LacA 1 (141 aa).

This sequence belongs to the LacAB/RpiB family. Heteromultimeric protein consisting of LacA and LacB.

The catalysed reaction is aldehydo-D-galactose 6-phosphate = keto-D-tagatose 6-phosphate. The protein operates within carbohydrate metabolism; D-galactose 6-phosphate degradation; D-tagatose 6-phosphate from D-galactose 6-phosphate: step 1/1. This chain is Galactose-6-phosphate isomerase subunit LacA 1, found in Streptococcus pyogenes serotype M6 (strain ATCC BAA-946 / MGAS10394).